A 160-amino-acid polypeptide reads, in one-letter code: Cytochrome b6-f complex subunit 4 (160 aa).

A run of 3 helical transmembrane segments spans residues 36-56 (LLYI…GLGV), 95-115 (LLGV…PFIE), and 131-151 (LVFL…TMPI).

This sequence belongs to the cytochrome b family. PetD subfamily. As to quaternary structure, the 4 large subunits of the cytochrome b6-f complex are cytochrome b6, subunit IV (17 kDa polypeptide, petD), cytochrome f and the Rieske protein, while the 4 small subunits are petG, petL, petM and petN. The complex functions as a dimer.

The protein resides in the plastid. It localises to the chloroplast thylakoid membrane. Its function is as follows. Component of the cytochrome b6-f complex, which mediates electron transfer between photosystem II (PSII) and photosystem I (PSI), cyclic electron flow around PSI, and state transitions. This Emiliania huxleyi (Coccolithophore) protein is Cytochrome b6-f complex subunit 4.